A 215-amino-acid polypeptide reads, in one-letter code: LexA repressor (215 aa).

Residues 28–48 (RAEIAAELGFSSPNAAEEHLR) constitute a DNA-binding region (H-T-H motif). Residues S133 and K170 each act as for autocatalytic cleavage activity in the active site.

It belongs to the peptidase S24 family. As to quaternary structure, homodimer.

It catalyses the reaction Hydrolysis of Ala-|-Gly bond in repressor LexA.. Represses a number of genes involved in the response to DNA damage (SOS response), including recA and lexA. In the presence of single-stranded DNA, RecA interacts with LexA causing an autocatalytic cleavage which disrupts the DNA-binding part of LexA, leading to derepression of the SOS regulon and eventually DNA repair. This chain is LexA repressor, found in Burkholderia cenocepacia (strain ATCC BAA-245 / DSM 16553 / LMG 16656 / NCTC 13227 / J2315 / CF5610) (Burkholderia cepacia (strain J2315)).